A 257-amino-acid chain; its full sequence is 4-chloro-allylglycine synthase (257 aa).

Residues Glu-112, His-119, Glu-173, His-203, Glu-207, and His-210 each contribute to the Fe cation site.

Fe(2+) is required as a cofactor.

The enzyme catalyses 4-chloro-L-lysine + AH2 + O2 = L-2-amino-4-chloropent-4-enoate + formaldehyde + A + NH4(+) + H2O. It functions in the pathway amino-acid metabolism. The protein operates within antibiotic biosynthesis. Functionally, involved in the biosynthesis of terminal alkyne-containing amino acids such as L-propargylglycine (Pra) and L-beta-ethynylserine, that are produced as antibiotics by S.cattleya. Catalyzes an oxidative C-C bond cleavage in 4-chloro-L-lysine to form 4-chloro-allyl-L-glycine (also named L-2-amino-4-chloropent-4-enoate), with release of formaldehyde and ammonia. Is also able to react with L-lysine directly to produce allylglycine in vitro. The sequence is that of 4-chloro-allylglycine synthase from Streptantibioticus cattleyicolor (strain ATCC 35852 / DSM 46488 / JCM 4925 / NBRC 14057 / NRRL 8057) (Streptomyces cattleya).